We begin with the raw amino-acid sequence, 83 residues long: MSTLRELRLRRALKEQSMRYLLSIKKTLPRWKGALIGLFLICVATISGCASESKLPEPPMVSVDSSLMVEPNLTTEMLNVFSQ.

The signal sequence occupies residues 1 to 50 (MSTLRELRLRRALKEQSMRYLLSIKKTLPRWKGALIGLFLICVATISGCA).

This sequence belongs to the T7likevirus o-spanin family. Homodimer. Interacts (via C-terminus) with the spanin inner membrane subunit (via C-terminus). Part of the spanin complex which spans the entire periplasmic space. The spanin complex is composed of spanin inner membrane subunit and spanin outer membrane subunit.

The protein resides in the host cell outer membrane. In terms of biological role, component of the spanin complex that disrupts the host outer membrane and participates in cell lysis during virus exit. The spanin complex conducts the final step in host lysis by disrupting the outer membrane after holin and endolysin action have permeabilized the inner membrane and degraded the host peptidoglycans. Host outer membrane disruption is possibly due to local fusion between the inner and outer membrane performed by the spanin complex. This chain is Spanin, outer lipoprotein subunit, found in Escherichia phage T7 (Bacteriophage T7).